Consider the following 230-residue polypeptide: ATP synthase subunit a (230 aa).

Helical transmembrane passes span 17–37 (LPIT…FIMA), 78–98 (IFPF…IGVI), 107–127 (DLSV…WFGI), 165–187 (LFGN…GFLV), and 198–218 (EAII…AGGI).

Belongs to the ATPase A chain family. F-type ATPases have 2 components, CF(1) - the catalytic core - and CF(0) - the membrane proton channel. CF(1) has five subunits: alpha(3), beta(3), gamma(1), delta(1), epsilon(1). CF(0) has three main subunits: a(1), b(2) and c(9-12). The alpha and beta chains form an alternating ring which encloses part of the gamma chain. CF(1) is attached to CF(0) by a central stalk formed by the gamma and epsilon chains, while a peripheral stalk is formed by the delta and b chains.

The protein localises to the cell inner membrane. Functionally, key component of the proton channel; it plays a direct role in the translocation of protons across the membrane. The sequence is that of ATP synthase subunit a from Legionella pneumophila (strain Corby).